A 184-amino-acid polypeptide reads, in one-letter code: Large ribosomal subunit protein eL14 (184 aa).

A disordered region spans residues 149 to 184; sequence KNAKKVDSTPAAKKRIEKARAARKAKPTAAKEKSKK. The span at 160-174 shows a compositional bias: basic residues; it reads AKKRIEKARAARKAK.

This sequence belongs to the eukaryotic ribosomal protein eL14 family.

The protein is Large ribosomal subunit protein eL14 of Trypanosoma congolense.